Here is a 693-residue protein sequence, read N- to C-terminus: Glycine--tRNA ligase beta subunit (693 aa).

The span at 65–74 (QPDKSVEKRG) shows a compositional bias: basic and acidic residues. The segment at 65–84 (QPDKSVEKRGPAVKAAFDDS) is disordered.

The protein belongs to the class-II aminoacyl-tRNA synthetase family. As to quaternary structure, tetramer of two alpha and two beta subunits.

The protein resides in the cytoplasm. The catalysed reaction is tRNA(Gly) + glycine + ATP = glycyl-tRNA(Gly) + AMP + diphosphate. In Marinobacter nauticus (strain ATCC 700491 / DSM 11845 / VT8) (Marinobacter aquaeolei), this protein is Glycine--tRNA ligase beta subunit.